The sequence spans 40 residues: Ribosome-inactivating protein saporin-1 (40 aa).

Belongs to the ribosome-inactivating protein family. Type 1 RIP subfamily.

The catalysed reaction is Endohydrolysis of the N-glycosidic bond at one specific adenosine on the 28S rRNA.. Its function is as follows. Ribosome-inactivating protein of type 1, inhibits protein synthesis in animal cells. The protein is Ribosome-inactivating protein saporin-1 (SAP1) of Saponaria officinalis (Common soapwort).